Consider the following 540-residue polypeptide: uncharacterized protein (540 aa).

Residues 1–58 (MAVSAFRGTRLPLFHHSQFPVARTVSGTSKKMIGARNFKGFVLTAQYSQTQDLFTSRL) constitute a chloroplast transit peptide. The region spanning 195–533 (YVDPTPIASA…ISIASNKRTN (339 aa)) is the Protein kinase domain. Residues 201–209 (IASASIAQV) and K224 contribute to the ATP site. Catalysis depends on D362, which acts as the Proton acceptor.

Belongs to the protein kinase superfamily. ADCK protein kinase family.

It localises to the plastid. It is found in the chloroplast. Its subcellular location is the plastoglobule. This is an uncharacterized protein from Arabidopsis thaliana (Mouse-ear cress).